The primary structure comprises 132 residues: Large ribosomal subunit protein bL17 (132 aa).

The protein belongs to the bacterial ribosomal protein bL17 family. In terms of assembly, part of the 50S ribosomal subunit. Contacts protein L32.

This Marinobacter nauticus (strain ATCC 700491 / DSM 11845 / VT8) (Marinobacter aquaeolei) protein is Large ribosomal subunit protein bL17.